Reading from the N-terminus, the 228-residue chain is Cytochrome b6-f complex iron-sulfur subunit 2, chloroplastic (228 aa).

Residues 1–49 constitute a chloroplast transit peptide; sequence MASSTLSPVTQLCSSKSGLSSVSQCLLLKPMKINSHGLGKDKRMKVKCM. The chain crosses the membrane as a helical span at residues 71-91; that stretch reads LLLGALSLPTAGMLVPYATFF. The region spanning 115–211 is the Rieske domain; sequence ASEWLKTHPP…ADIDDGKVVF (97 aa). [2Fe-2S] cluster-binding residues include cysteine 157, histidine 159, cysteine 175, and histidine 178. The cysteines at positions 162 and 177 are disulfide-linked.

The protein belongs to the Rieske iron-sulfur protein family. As to quaternary structure, the 4 large subunits of the cytochrome b6-f complex are cytochrome b6, subunit IV (17 kDa polypeptide, petD), cytochrome f and the Rieske protein, while the 4 small subunits are petG, petL, petM and petN. The complex functions as a dimer. Requires [2Fe-2S] cluster as cofactor.

The protein resides in the plastid. It is found in the chloroplast thylakoid membrane. It carries out the reaction 2 oxidized [plastocyanin] + a plastoquinol + 2 H(+)(in) = 2 reduced [plastocyanin] + a plastoquinone + 4 H(+)(out). Its function is as follows. Component of the cytochrome b6-f complex, which mediates electron transfer between photosystem II (PSII) and photosystem I (PSI), cyclic electron flow around PSI, and state transitions. This is Cytochrome b6-f complex iron-sulfur subunit 2, chloroplastic (petC2) from Nicotiana tabacum (Common tobacco).